A 551-amino-acid chain; its full sequence is Arginine--tRNA ligase (551 aa).

Positions Ala-125–His-135 match the 'HIGH' region motif.

It belongs to the class-I aminoacyl-tRNA synthetase family. Monomer.

Its subcellular location is the cytoplasm. The enzyme catalyses tRNA(Arg) + L-arginine + ATP = L-arginyl-tRNA(Arg) + AMP + diphosphate. This chain is Arginine--tRNA ligase, found in Nitratidesulfovibrio vulgaris (strain ATCC 29579 / DSM 644 / CCUG 34227 / NCIMB 8303 / VKM B-1760 / Hildenborough) (Desulfovibrio vulgaris).